The primary structure comprises 145 residues: D-aminoacyl-tRNA deacylase (145 aa).

A Gly-cisPro motif, important for rejection of L-amino acids motif is present at residues 137-138 (GP).

Belongs to the DTD family. In terms of assembly, homodimer.

Its subcellular location is the cytoplasm. The enzyme catalyses glycyl-tRNA(Ala) + H2O = tRNA(Ala) + glycine + H(+). The catalysed reaction is a D-aminoacyl-tRNA + H2O = a tRNA + a D-alpha-amino acid + H(+). Its function is as follows. An aminoacyl-tRNA editing enzyme that deacylates mischarged D-aminoacyl-tRNAs. Also deacylates mischarged glycyl-tRNA(Ala), protecting cells against glycine mischarging by AlaRS. Acts via tRNA-based rather than protein-based catalysis; rejects L-amino acids rather than detecting D-amino acids in the active site. By recycling D-aminoacyl-tRNA to D-amino acids and free tRNA molecules, this enzyme counteracts the toxicity associated with the formation of D-aminoacyl-tRNA entities in vivo and helps enforce protein L-homochirality. This Shewanella sediminis (strain HAW-EB3) protein is D-aminoacyl-tRNA deacylase.